We begin with the raw amino-acid sequence, 290 residues long: Type II secretion system protein C (290 aa).

The Cytoplasmic portion of the chain corresponds to 1-28 (MTLPFRDDLLSSLLARCKTVPLSRFSQP). Residues 29–46 (LFWLLLLLLAHQCAGLTW) traverse the membrane as a helical segment. The Periplasmic segment spans residues 47 to 290 (RLLDLGSQQS…LYDVYVGLSE (244 aa)).

Belongs to the GSP C family.

It is found in the cell inner membrane. Functionally, involved in a type II secretion system (T2SS, formerly general secretion pathway, GSP) for the export of proteins. The chain is Type II secretion system protein C (exeC) from Aeromonas salmonicida.